The chain runs to 131 residues: Sec-independent protein translocase protein TatB (131 aa).

The helical transmembrane segment at 2–22 (FDGIGFMELLLIGVLGLVVLG) threads the bilayer. Positions 69–131 (NQGLKNLAPE…ENAKSDKPNG (63 aa)) are disordered. Residues 105–123 (AKETPAKETATTETTSTEN) show a composition bias toward low complexity.

It belongs to the TatB family. As to quaternary structure, the Tat system comprises two distinct complexes: a TatABC complex, containing multiple copies of TatA, TatB and TatC subunits, and a separate TatA complex, containing only TatA subunits. Substrates initially bind to the TatABC complex, which probably triggers association of the separate TatA complex to form the active translocon.

It localises to the cell inner membrane. In terms of biological role, part of the twin-arginine translocation (Tat) system that transports large folded proteins containing a characteristic twin-arginine motif in their signal peptide across membranes. Together with TatC, TatB is part of a receptor directly interacting with Tat signal peptides. TatB may form an oligomeric binding site that transiently accommodates folded Tat precursor proteins before their translocation. This Shewanella piezotolerans (strain WP3 / JCM 13877) protein is Sec-independent protein translocase protein TatB.